Here is a 131-residue protein sequence, read N- to C-terminus: Ribosome-binding factor A (131 aa).

Residues 110-131 are disordered; that stretch reads QMNLGEDNEDNEDKENNDPGEE. A compositionally biased stretch (acidic residues) spans 115–131; sequence EDNEDNEDKENNDPGEE.

It belongs to the RbfA family. Monomer. Binds 30S ribosomal subunits, but not 50S ribosomal subunits or 70S ribosomes.

It is found in the cytoplasm. Its function is as follows. One of several proteins that assist in the late maturation steps of the functional core of the 30S ribosomal subunit. Associates with free 30S ribosomal subunits (but not with 30S subunits that are part of 70S ribosomes or polysomes). Required for efficient processing of 16S rRNA. May interact with the 5'-terminal helix region of 16S rRNA. This Natranaerobius thermophilus (strain ATCC BAA-1301 / DSM 18059 / JW/NM-WN-LF) protein is Ribosome-binding factor A.